Reading from the N-terminus, the 122-residue chain is Histone H2B.1 (122 aa).

Residues 1–10 (MAPKKAPAAA) are compositionally biased toward low complexity. Residues 1–28 (MAPKKAPAAAAEKKVKKAPTTEKKNKKK) form a disordered region. Residue A2 is modified to N,N,N-trimethylalanine. An N6-acetyllysine mark is found at K5 and K42. K116 is covalently cross-linked (Glycyl lysine isopeptide (Lys-Gly) (interchain with G-Cter in ubiquitin)).

The protein belongs to the histone H2B family. The nucleosome is a histone octamer containing two molecules each of H2A, H2B, H3 and H4 assembled in one H3-H4 heterotetramer and two H2A-H2B heterodimers. The octamer wraps approximately 147 bp of DNA. Post-translationally, acetylation occurs almost exclusively in the MAC. Monoubiquitination to form H2BK115ub1 gives a specific tag for epigenetic transcriptional activation and is also prerequisite for H3K4me and H3K79me formation.

It localises to the nucleus. It is found in the chromosome. Functionally, core component of nucleosome. Nucleosomes wrap and compact DNA into chromatin, limiting DNA accessibility to the cellular machineries which require DNA as a template. Histones thereby play a central role in transcription regulation, DNA repair, DNA replication and chromosomal stability. DNA accessibility is regulated via a complex set of post-translational modifications of histones, also called histone code, and nucleosome remodeling. This Tetrahymena thermophila (strain SB210) protein is Histone H2B.1 (HTB1).